Consider the following 156-residue polypeptide: Arginine repressor (156 aa).

The protein belongs to the ArgR family.

Its subcellular location is the cytoplasm. It functions in the pathway amino-acid biosynthesis; L-arginine biosynthesis [regulation]. Regulates arginine biosynthesis genes. The chain is Arginine repressor from Sodalis glossinidius (strain morsitans).